A 290-amino-acid chain; its full sequence is Arylamine N-acetyltransferase 1 (290 aa).

Position 1 is an N-acetylmethionine (Met1). Residue Ser103 coordinates CoA. Ile106–His107 contacts substrate. CoA is bound at residue Tyr208.

It belongs to the arylamine N-acetyltransferase family.

The protein resides in the cytoplasm. The catalysed reaction is an arylamine + acetyl-CoA = an N-acetylarylamine + CoA. Its function is as follows. Participates in the detoxification of a plethora of hydrazine and arylamine drugs. The sequence is that of Arylamine N-acetyltransferase 1 (NAT1) from Bos taurus (Bovine).